A 165-amino-acid polypeptide reads, in one-letter code: SsrA-binding protein (165 aa).

A compositionally biased stretch (basic and acidic residues) spans 135-158 (QAHDKRQDMARRDAQREVTRELGR). Positions 135 to 165 (QAHDKRQDMARRDAQREVTRELGRRVKGMTN) are disordered.

Belongs to the SmpB family.

It is found in the cytoplasm. Functionally, required for rescue of stalled ribosomes mediated by trans-translation. Binds to transfer-messenger RNA (tmRNA), required for stable association of tmRNA with ribosomes. tmRNA and SmpB together mimic tRNA shape, replacing the anticodon stem-loop with SmpB. tmRNA is encoded by the ssrA gene; the 2 termini fold to resemble tRNA(Ala) and it encodes a 'tag peptide', a short internal open reading frame. During trans-translation Ala-aminoacylated tmRNA acts like a tRNA, entering the A-site of stalled ribosomes, displacing the stalled mRNA. The ribosome then switches to translate the ORF on the tmRNA; the nascent peptide is terminated with the 'tag peptide' encoded by the tmRNA and targeted for degradation. The ribosome is freed to recommence translation, which seems to be the essential function of trans-translation. In Mycolicibacterium gilvum (strain PYR-GCK) (Mycobacterium gilvum (strain PYR-GCK)), this protein is SsrA-binding protein.